The following is a 700-amino-acid chain: Polyribonucleotide nucleotidyltransferase (700 aa).

Residues Asp485 and Asp491 each contribute to the Mg(2+) site. In terms of domain architecture, KH spans 552–611 (PRITVIKINPEKIRDVIGKGGAVIRALTEETGTTIELEDDGTVKIASSNGEATKEAIRRI). The region spanning 621 to 689 (GRIYNGKVIR…RQGRVRLSIK (69 aa)) is the S1 motif domain.

It belongs to the polyribonucleotide nucleotidyltransferase family. Component of the RNA degradosome, which is a multiprotein complex involved in RNA processing and mRNA degradation. The cofactor is Mg(2+).

The protein resides in the cytoplasm. The catalysed reaction is RNA(n+1) + phosphate = RNA(n) + a ribonucleoside 5'-diphosphate. Its function is as follows. Involved in mRNA degradation. Catalyzes the phosphorolysis of single-stranded polyribonucleotides processively in the 3'- to 5'-direction. In Shewanella baltica (strain OS155 / ATCC BAA-1091), this protein is Polyribonucleotide nucleotidyltransferase.